The primary structure comprises 395 residues: Elongation factor Tu (395 aa).

Residues 10–204 (LPHVNIGTIG…AVDEYIPTPQ (195 aa)) enclose the tr-type G domain. The interval 19 to 26 (GHVDHGKT) is G1. 19 to 26 (GHVDHGKT) provides a ligand contact to GTP. Threonine 26 is a Mg(2+) binding site. The G2 stretch occupies residues 60–64 (GITIN). The interval 81–84 (DCPG) is G3. GTP-binding positions include 81–85 (DCPGH) and 136–139 (NKCD). Residues 136 to 139 (NKCD) form a G4 region. A G5 region spans residues 174–176 (SAL).

It belongs to the TRAFAC class translation factor GTPase superfamily. Classic translation factor GTPase family. EF-Tu/EF-1A subfamily. Monomer.

Its subcellular location is the cytoplasm. It carries out the reaction GTP + H2O = GDP + phosphate + H(+). Functionally, GTP hydrolase that promotes the GTP-dependent binding of aminoacyl-tRNA to the A-site of ribosomes during protein biosynthesis. The protein is Elongation factor Tu of Mycoplasma capricolum subsp. capricolum (strain California kid / ATCC 27343 / NCTC 10154).